The sequence spans 197 residues: Predicted GPI-anchored protein 34 (197 aa).

Positions 1–20 (MKFTSLICSSILLIIPTVMA) are cleaved as a signal peptide. Asparagine 110, asparagine 114, and asparagine 152 each carry an N-linked (GlcNAc...) asparagine glycan. A lipid anchor (GPI-anchor amidated glycine) is attached at glycine 169. Positions 170 to 197 (AAAMAGPVPILTNSIFTAGLLALAAVLL) are cleaved as a propeptide — removed in mature form.

It is found in the cell membrane. Predicted GPI-anchored protein which may have a role during host infection. The protein is Predicted GPI-anchored protein 34 (PGA34) of Candida albicans (strain SC5314 / ATCC MYA-2876) (Yeast).